Consider the following 576-residue polypeptide: Peroxisomal targeting signal receptor (576 aa).

Cysteine 10 is covalently cross-linked (Glycyl cysteine thioester (Cys-Gly) (interchain with G-Cter in ubiquitin)). The interval 11 to 33 (AAGSNPLAQFTKHTQHDTSLQQS) is amphipathic helix 1 (AH1). A Glycyl lysine isopeptide (Lys-Gly) (interchain with G-Cter in ubiquitin) cross-link involves residue lysine 22. The segment at 58-75 (RQQMDQFMQQQNNPAFNF) is amphipathic helix 2 (AH2). 2 consecutive short sequence motifs (wxxxF/Y motif) follow at residues 100–104 (WNQEF) and 128–132 (WAQDF). A disordered region spans residues 176-195 (AQMQQQNPAQAQTSEQSQTQ). Residues 196–200 (WEDQF) carry the WxxxF/Y motif 3 motif. Residues 224–240 (FEQVWDDIQVSYADVEL) are amphipathic helix 4 (AH4). The short motif at 249-253 (WEKDF) is the WxxxF/Y motif 4 element. TPR repeat units follow at residues 278 to 311 (PDAY…DPKH), 312 to 345 (VDAW…DPTN), 346 to 383 (LAAL…IASR), 384 to 421 (ARSS…ASMD), 422 to 455 (ADVQ…EPDK), 456 to 489 (ALNW…NPNF), and 490 to 523 (VRAR…HEVE).

The protein belongs to the peroxisomal targeting signal receptor family. As to quaternary structure, interacts (via WxxxF/Y and LVxEF motifs) with PEX14; promoting translocation through the PEX13-PEX14 docking complex. Interacts with PEX8. Post-translationally, a disulfide bond is created between Cys-10 and Cys-338 or Cys-444. In terms of processing, monoubiquitinated at Cys-10 by PEX2 during PEX5 passage through the retrotranslocation channel: monoubiquitination acts as a signal for PEX5 extraction and is required for proper export from peroxisomes and recycling. When PEX5 recycling is compromised, polyubiquitinated at Lys-22 by PEX10 during its passage through the retrotranslocation channel, leading to its degradation.

Its subcellular location is the peroxisome membrane. The protein localises to the cytoplasm. It is found in the cytosol. It localises to the peroxisome matrix. Its function is as follows. Receptor that mediates peroxisomal import of proteins containing a C-terminal PTS1-type tripeptide peroxisomal targeting signal (SKL-type). Binds to cargo proteins containing a PTS1 peroxisomal targeting signal in the cytosol, and translocates them into the peroxisome matrix by passing through the peroxisomal docking complex along with cargo proteins. PEX5 receptor is then retrotranslocated into the cytosol, leading to release of bound cargo in the peroxisome matrix, and reset for a subsequent peroxisome import cycle. Required for PEX7 ubiquitination. The protein is Peroxisomal targeting signal receptor of Komagataella phaffii (strain GS115 / ATCC 20864) (Yeast).